The following is a 115-amino-acid chain: Large ribosomal subunit protein bL19 (115 aa).

The protein belongs to the bacterial ribosomal protein bL19 family. In terms of assembly, part of the 50S ribosomal subunit.

Functionally, this protein is located at the 30S-50S ribosomal subunit interface and may play a role in the structure and function of the aminoacyl-tRNA binding site. The protein is Large ribosomal subunit protein bL19 (rplS) of Bacillus subtilis (strain 168).